The primary structure comprises 402 residues: Acetate kinase (402 aa).

Asn7 contributes to the Mg(2+) binding site. ATP is bound at residue Lys14. Position 95 (Arg95) interacts with substrate. Catalysis depends on Asp152, which acts as the Proton donor/acceptor. ATP contacts are provided by residues His212–Gly216, Asp286–Arg288, and Gly334–Asn338. Glu388 lines the Mg(2+) pocket.

The protein belongs to the acetokinase family. As to quaternary structure, homodimer. The cofactor is Mg(2+). Requires Mn(2+) as cofactor.

It localises to the cytoplasm. It carries out the reaction acetate + ATP = acetyl phosphate + ADP. The protein operates within metabolic intermediate biosynthesis; acetyl-CoA biosynthesis; acetyl-CoA from acetate: step 1/2. In terms of biological role, catalyzes the formation of acetyl phosphate from acetate and ATP. Can also catalyze the reverse reaction. This Nitratidesulfovibrio vulgaris (strain ATCC 29579 / DSM 644 / CCUG 34227 / NCIMB 8303 / VKM B-1760 / Hildenborough) (Desulfovibrio vulgaris) protein is Acetate kinase.